The sequence spans 161 residues: DNA-binding protein inhibitor ID-4 (161 aa).

The bHLH domain occupies 52–104; it reads AAEAAADEPALCLQCDMNDCYSRLRRLVPTIPPNKKVSKVEILQHVIDYILDL.

Heterodimer with other HLH proteins.

It is found in the nucleus. Transcriptional regulator (lacking a basic DNA binding domain) which negatively regulates the basic helix-loop-helix (bHLH) transcription factors by forming heterodimers and inhibiting their DNA binding and transcriptional activity. Implicated in regulating a variety of cellular processes, including cellular growth, senescence, differentiation, apoptosis, angiogenesis, and neoplastic transformation. This Mus musculus (Mouse) protein is DNA-binding protein inhibitor ID-4 (Id4).